The following is a 214-amino-acid chain: uncharacterized protein (214 aa).

The next 2 membrane-spanning stretches (helical) occupy residues 23 to 43 (ILVG…VAAA) and 65 to 85 (VLYA…PVLL). The disordered stretch occupies residues 96 to 115 (ATRPTGASVRGGRSIGSGHP). The next 2 membrane-spanning stretches (helical) occupy residues 152-172 (VVLT…TYLM) and 181-201 (WISY…EWLY).

The protein resides in the cell membrane. This is an uncharacterized protein from Mycobacterium tuberculosis (strain CDC 1551 / Oshkosh).